A 504-amino-acid chain; its full sequence is E3 ubiquitin-protein ligase dbl4 (504 aa).

The tract at residues 127–338 (HEGTCEICYD…NNWYTCNRYE (212 aa)) is TRIAD supradomain. Cys131, Cys134, Cys147, His149, Cys152, Cys155, Cys173, Cys178, Cys217, Cys222, Cys244, Cys246, Cys251, Cys254, His259, Cys264, Cys291, and Cys294 together coordinate Zn(2+). The segment at 131–178 (CEICYDEGCLPFFSAECDHEFCLACYRQYLDSRISEGESVIQCPEESC) adopts an RING-type 1 zinc-finger fold. Residues 197-264 (DRYHRLLDRS…GHDNHQPTIC (68 aa)) form an IBR-type zinc finger. The RING-type 2; atypical zinc-finger motif lies at 291-320 (CPKCSTTIEKNGGCNHMTCKKCKYEFCWVC). The active site involves Cys304. Zn(2+) contacts are provided by Cys309, Cys312, Cys317, Cys320, His327, and Cys334.

It belongs to the RBR family.

Its subcellular location is the cytoplasm. It is found in the nucleus. The catalysed reaction is [E2 ubiquitin-conjugating enzyme]-S-ubiquitinyl-L-cysteine + [acceptor protein]-L-lysine = [E2 ubiquitin-conjugating enzyme]-L-cysteine + [acceptor protein]-N(6)-ubiquitinyl-L-lysine.. It functions in the pathway protein modification; protein ubiquitination. Probable ubiquitin-protein ligase involved in the degradation-related ubiquitination of histones. Contributes to the post-translational regulation of histone protein levels by polyubiquitination of excess histones for subsequent degradation. The chain is E3 ubiquitin-protein ligase dbl4 from Schizosaccharomyces pombe (strain 972 / ATCC 24843) (Fission yeast).